Consider the following 201-residue polypeptide: Ribosome maturation factor RimP (201 aa).

A disordered region spans residues 180–201; the sequence is LRRGSAPAQDEEGEDEAPGAPL. A compositionally biased stretch (acidic residues) spans 188 to 201; it reads QDEEGEDEAPGAPL.

The protein belongs to the RimP family.

The protein resides in the cytoplasm. Its function is as follows. Required for maturation of 30S ribosomal subunits. The polypeptide is Ribosome maturation factor RimP (Methylobacterium sp. (strain 4-46)).